Reading from the N-terminus, the 273-residue chain is Shikimate dehydrogenase (NADP(+)) (273 aa).

Residues 14–16 and Thr-61 each bind shikimate; that span reads SKS. Residue Lys-65 is the Proton acceptor of the active site. Residue Asp-77 participates in NADP(+) binding. Residues Asn-86 and Asp-102 each contribute to the shikimate site. NADP(+)-binding positions include 126-130, 150-155, and Met-213; these read GAGGA and NRTYEK. Tyr-215 serves as a coordination point for shikimate. Residue Gly-237 coordinates NADP(+).

Belongs to the shikimate dehydrogenase family. Homodimer.

It carries out the reaction shikimate + NADP(+) = 3-dehydroshikimate + NADPH + H(+). It functions in the pathway metabolic intermediate biosynthesis; chorismate biosynthesis; chorismate from D-erythrose 4-phosphate and phosphoenolpyruvate: step 4/7. In terms of biological role, involved in the biosynthesis of the chorismate, which leads to the biosynthesis of aromatic amino acids. Catalyzes the reversible NADPH linked reduction of 3-dehydroshikimate (DHSA) to yield shikimate (SA). The sequence is that of Shikimate dehydrogenase (NADP(+)) from Aliivibrio salmonicida (strain LFI1238) (Vibrio salmonicida (strain LFI1238)).